We begin with the raw amino-acid sequence, 99 residues long: Regulatory protein FanB (99 aa).

In terms of biological role, trans-acting protein involved in the regulation of the biogenesis of K99 fimbriae (FanC). This chain is Regulatory protein FanB (fanB), found in Escherichia coli.